We begin with the raw amino-acid sequence, 140 residues long: Non-specific lipid transfer protein GPI-anchored 33 (140 aa).

The N-terminal stretch at 1 to 27 (MAYTNKVTISAAVATMMLFLAVTIVDA) is a signal peptide. 4 disulfides stabilise this stretch: Cys-40/Cys-80, Cys-52/Cys-64, Cys-65/Cys-104, and Cys-78/Cys-112. Asn-91 carries N-linked (GlcNAc...) asparagine glycosylation. Gly-115 carries the GPI-anchor amidated glycine lipid modification. The propeptide at 116 to 140 (DASGGSTNKIAASMVLLGLVASLFF) is removed in mature form.

It belongs to the plant LTP family.

The protein localises to the cell membrane. Functionally, probable lipid transfer protein. This chain is Non-specific lipid transfer protein GPI-anchored 33, found in Arabidopsis thaliana (Mouse-ear cress).